A 343-amino-acid polypeptide reads, in one-letter code: Ubiquitin carboxyl-terminal hydrolase isozyme L5 (343 aa).

Positions 6 to 218 (GWCTIESDPG…IRFNLMAVIK (213 aa)) constitute a UCH catalytic domain. Cys-83 serves as the catalytic Nucleophile. The active-site Proton donor is the His-157. The disordered stretch occupies residues 242–266 (LSELNSGSGGDNKEESGGATPTTKE). Positions 306 to 334 (NFTPLILNLIKGLAEKDNLQPLIQKAKDQ) constitute a ULD domain.

This sequence belongs to the peptidase C12 family. As to quaternary structure, component of the 19S (PA700) regulatory complex of the 26S proteasome.

The protein localises to the cytoplasm. Its subcellular location is the nucleus. The catalysed reaction is Thiol-dependent hydrolysis of ester, thioester, amide, peptide and isopeptide bonds formed by the C-terminal Gly of ubiquitin (a 76-residue protein attached to proteins as an intracellular targeting signal).. Functionally, protease that specifically cleaves 'Lys-48'-linked polyubiquitin chains. Deubiquitinating enzyme associated with the 19S regulatory subunit of the 26S proteasome. This is Ubiquitin carboxyl-terminal hydrolase isozyme L5 (uch2) from Dictyostelium discoideum (Social amoeba).